A 510-amino-acid chain; its full sequence is 2,3-bisphosphoglycerate-independent phosphoglycerate mutase (510 aa).

The Mn(2+) site is built by D12 and S62. S62 serves as the catalytic Phosphoserine intermediate. Substrate-binding positions include H123, 153-154 (RD), R185, R191, 260-263 (RPDR), and K335. D402, H406, D443, H444, and H461 together coordinate Mn(2+).

The protein belongs to the BPG-independent phosphoglycerate mutase family. Monomer. Requires Mn(2+) as cofactor.

The catalysed reaction is (2R)-2-phosphoglycerate = (2R)-3-phosphoglycerate. The protein operates within carbohydrate degradation; glycolysis; pyruvate from D-glyceraldehyde 3-phosphate: step 3/5. Its function is as follows. Catalyzes the interconversion of 2-phosphoglycerate and 3-phosphoglycerate. This is 2,3-bisphosphoglycerate-independent phosphoglycerate mutase from Listeria monocytogenes serotype 4b (strain F2365).